A 369-amino-acid chain; its full sequence is GDSL esterase/lipase At5g42170 (369 aa).

A signal peptide spans 1–16; it reads MSRLVYVIFLLVVVEG. N-linked (GlcNAc...) asparagine glycosylation is found at Asn28 and Asn45. The Nucleophile role is filled by Ser57. N-linked (GlcNAc...) asparagine glycans are attached at residues Asn203 and Asn336. Active-site residues include Asp344 and His347.

It belongs to the 'GDSL' lipolytic enzyme family.

Its subcellular location is the secreted. The chain is GDSL esterase/lipase At5g42170 from Arabidopsis thaliana (Mouse-ear cress).